We begin with the raw amino-acid sequence, 120 residues long: uncharacterized protein (120 aa).

The chain crosses the membrane as a helical span at residues 40–62 (SFLTDALLNLIYILFFSSSVFNW).

The protein resides in the membrane. This is an uncharacterized protein from Saccharomyces cerevisiae (strain ATCC 204508 / S288c) (Baker's yeast).